The chain runs to 292 residues: MSPAFHPLRTRVGEAIEQSLFRRTDPVPPPRPSGAVTLRADGIAVTRGGRPVLDDVSVDVRIGEVLVLVGPNGAGKSTLLAALSGDQDVHTGTVHLDDRDLGEWTALEMAQRRAVLPQQNTVGFSFTARQVITMGRSPWARTPRSDDDAVAIAEAMRICDVVAFADRPFTALSGGERARVALARVLAQRTETILLDEPTAALDLGHQETVMRLARSRAEQGTAVVVVLHDLALAAAYADRIVVLEQGRVAANGPPADVLSEELLTRVYGHPVEVIEHPVTGATLVLPRRDQR.

An ABC transporter domain is found at 38-271 (LRADGIAVTR…ELLTRVYGHP (234 aa)). ATP is bound at residue 70 to 77 (GPNGAGKS).

The protein belongs to the ABC transporter superfamily. Heme (hemin) importer (TC 3.A.1.14.5) family. In terms of assembly, the complex is composed of two ATP-binding proteins (HmuV), two transmembrane proteins (HmuU) and a solute-binding protein (HmuT).

The protein localises to the cell membrane. Its function is as follows. Part of the ABC transporter complex HmuTUV involved in hemin import. Responsible for energy coupling to the transport system. In Rhodococcus jostii (strain RHA1), this protein is Hemin import ATP-binding protein HmuV.